The chain runs to 363 residues: 3-isopropylmalate dehydrogenase (363 aa).

NAD(+) is bound at residue 78–91; sequence GPKWEHLPPDQQPE. Arginine 99, arginine 109, arginine 138, and aspartate 227 together coordinate substrate. The Mg(2+) site is built by aspartate 227, aspartate 251, and aspartate 255. 285–297 provides a ligand contact to NAD(+); the sequence is GSAPDITGKNIAN.

Belongs to the isocitrate and isopropylmalate dehydrogenases family. LeuB type 1 subfamily. As to quaternary structure, homodimer. It depends on Mg(2+) as a cofactor. Requires Mn(2+) as cofactor.

It localises to the cytoplasm. It catalyses the reaction (2R,3S)-3-isopropylmalate + NAD(+) = 4-methyl-2-oxopentanoate + CO2 + NADH. Its pathway is amino-acid biosynthesis; L-leucine biosynthesis; L-leucine from 3-methyl-2-oxobutanoate: step 3/4. Its function is as follows. Catalyzes the oxidation of 3-carboxy-2-hydroxy-4-methylpentanoate (3-isopropylmalate) to 3-carboxy-4-methyl-2-oxopentanoate. The product decarboxylates to 4-methyl-2 oxopentanoate. The protein is 3-isopropylmalate dehydrogenase of Shigella boydii serotype 4 (strain Sb227).